The primary structure comprises 50 residues: Cytochrome c oxidase subunit 4 (50 aa).

The Cytoplasmic segment spans residues 2-17 (ASHHEITDHKHGEMDI). Residues 18–49 (RHQQATFAGFIKGATWVSILSIAVLVFLALAN) traverse the membrane as a helical segment. A topological domain (periplasmic) is located at residue Ser50.

The protein resides in the cell inner membrane. It catalyses the reaction 4 Fe(II)-[cytochrome c] + O2 + 8 H(+)(in) = 4 Fe(III)-[cytochrome c] + 2 H2O + 4 H(+)(out). Functionally, not required for enzymatic activity or proton pumping of the cytochrome c oxidase complex. This Paracoccus denitrificans protein is Cytochrome c oxidase subunit 4 (ctaH).